Reading from the N-terminus, the 971-residue chain is Kinesin-like protein KIN-14C (971 aa).

One can recognise a Calponin-homology (CH) domain in the interval 14–119 (ANRRAEVIDW…CLLALKDNVA (106 aa)). Residues 272–357 (IKALETLVNG…QMETKARQME (86 aa)) adopt a coiled-coil conformation. Residues 472–799 (NIRVYCRVRP…LKFAERVSGV (328 aa)) form the Kinesin motor domain. Residue 556–563 (GQTGSGKT) coordinates ATP. Positions 809 to 844 (EGKDIKELLEQVASLKDTIARKDMEIEQLQLLKSKS) form a coiled coil. Residues 839 to 881 (LLKSKSPNSMTDRNGSNLLRQSTSSTGLSSLPVASQQNQQLSG) show a composition bias toward polar residues. The segment at 839-971 (LLKSKSPNSM…GSLAKPSKRR (133 aa)) is disordered.

This sequence belongs to the TRAFAC class myosin-kinesin ATPase superfamily. Kinesin family. KIN-14 subfamily.

The sequence is that of Kinesin-like protein KIN-14C from Oryza sativa subsp. japonica (Rice).